Here is a 219-residue protein sequence, read N- to C-terminus: Small ribosomal subunit protein uS3 (219 aa).

Residues 38-106 form the KH type-2 domain; it reads IREYINVRLK…RVHINILEVK (69 aa).

Belongs to the universal ribosomal protein uS3 family. In terms of assembly, part of the 30S ribosomal subunit. Forms a tight complex with proteins S10 and S14.

Binds the lower part of the 30S subunit head. Binds mRNA in the 70S ribosome, positioning it for translation. This chain is Small ribosomal subunit protein uS3, found in Bacillus thuringiensis (strain Al Hakam).